A 152-amino-acid chain; its full sequence is Globin, minor (152 aa).

The region spanning 12–152 (VNNSYHKDLL…ALIAVVQAAL (141 aa)) is the Globin domain. Residue H104 participates in heme b binding.

Belongs to the globin family.

The sequence is that of Globin, minor from Anadara trapezia (Sydney cockle).